A 132-amino-acid chain; its full sequence is Small ribosomal subunit protein uS8 (132 aa).

It belongs to the universal ribosomal protein uS8 family. In terms of assembly, part of the 30S ribosomal subunit. Contacts proteins S5 and S12.

In terms of biological role, one of the primary rRNA binding proteins, it binds directly to 16S rRNA central domain where it helps coordinate assembly of the platform of the 30S subunit. This is Small ribosomal subunit protein uS8 from Lactobacillus johnsonii (strain CNCM I-12250 / La1 / NCC 533).